Here is a 309-residue protein sequence, read N- to C-terminus: Tagatose-6-phosphate kinase (309 aa).

The protein belongs to the carbohydrate kinase PfkB family. LacC subfamily.

The enzyme catalyses D-tagatofuranose 6-phosphate + ATP = D-tagatofuranose 1,6-bisphosphate + ADP + H(+). It participates in carbohydrate metabolism; D-tagatose 6-phosphate degradation; D-glyceraldehyde 3-phosphate and glycerone phosphate from D-tagatose 6-phosphate: step 1/2. This Streptococcus pneumoniae (strain Taiwan19F-14) protein is Tagatose-6-phosphate kinase.